We begin with the raw amino-acid sequence, 160 residues long: 2-C-methyl-D-erythritol 2,4-cyclodiphosphate synthase (160 aa).

A divalent metal cation is bound by residues Asp-11 and His-13. Residues 11–13 and 37–38 contribute to the 4-CDP-2-C-methyl-D-erythritol 2-phosphate site; these read DVH and HS. His-45 is an a divalent metal cation binding site. 4-CDP-2-C-methyl-D-erythritol 2-phosphate-binding positions include 59-61, 64-68, 135-138, Phe-142, and Arg-145; these read DIG, FPDTD, and TTTE.

Belongs to the IspF family. Homotrimer. A divalent metal cation serves as cofactor.

It carries out the reaction 4-CDP-2-C-methyl-D-erythritol 2-phosphate = 2-C-methyl-D-erythritol 2,4-cyclic diphosphate + CMP. It functions in the pathway isoprenoid biosynthesis; isopentenyl diphosphate biosynthesis via DXP pathway; isopentenyl diphosphate from 1-deoxy-D-xylulose 5-phosphate: step 4/6. Involved in the biosynthesis of isopentenyl diphosphate (IPP) and dimethylallyl diphosphate (DMAPP), two major building blocks of isoprenoid compounds. Catalyzes the conversion of 4-diphosphocytidyl-2-C-methyl-D-erythritol 2-phosphate (CDP-ME2P) to 2-C-methyl-D-erythritol 2,4-cyclodiphosphate (ME-CPP) with a corresponding release of cytidine 5-monophosphate (CMP). This Alcanivorax borkumensis (strain ATCC 700651 / DSM 11573 / NCIMB 13689 / SK2) protein is 2-C-methyl-D-erythritol 2,4-cyclodiphosphate synthase.